The primary structure comprises 881 residues: Nitrate reductase [NADH] 1 (881 aa).

Residues methionine 1–asparagine 46 form a disordered region. Cysteine 167 lines the Mo-molybdopterin pocket. Residues threonine 515–methionine 590 enclose the Cytochrome b5 heme-binding domain. Residues histidine 550 and histidine 573 each contribute to the heme site. The FAD-binding FR-type domain maps to arginine 625–threonine 737. Residues arginine 677 to threonine 680, valine 694 to tyrosine 698, phenylalanine 699, phenylalanine 706, isoleucine 711 to serine 713, and threonine 764 each bind FAD.

The protein belongs to the nitrate reductase family. In terms of assembly, homodimer. FAD serves as cofactor. The cofactor is heme. Mo-molybdopterin is required as a cofactor.

The catalysed reaction is nitrite + NAD(+) + H2O = nitrate + NADH + H(+). In terms of biological role, nitrate reductase is a key enzyme involved in the first step of nitrate assimilation in plants, fungi and bacteria. The polypeptide is Nitrate reductase [NADH] 1 (NIA1) (Phaseolus vulgaris (Kidney bean)).